Here is a 118-residue protein sequence, read N- to C-terminus: MARIAGINIPDQKHTVIALTAIFGIGRTRARAICAATSIAETAKIKELSEAQIDTLREEVAKYLVEGDLRREISMNIKRLMDLGCYRGLRHRRSLPLRGQRTKTNARTRKGPRKPIKK.

Residues 94–118 form a disordered region; that stretch reads SLPLRGQRTKTNARTRKGPRKPIKK.

Belongs to the universal ribosomal protein uS13 family. In terms of assembly, part of the 30S ribosomal subunit. Forms a loose heterodimer with protein S19. Forms two bridges to the 50S subunit in the 70S ribosome.

Functionally, located at the top of the head of the 30S subunit, it contacts several helices of the 16S rRNA. In the 70S ribosome it contacts the 23S rRNA (bridge B1a) and protein L5 of the 50S subunit (bridge B1b), connecting the 2 subunits; these bridges are implicated in subunit movement. Contacts the tRNAs in the A and P-sites. The chain is Small ribosomal subunit protein uS13 from Shewanella oneidensis (strain ATCC 700550 / JCM 31522 / CIP 106686 / LMG 19005 / NCIMB 14063 / MR-1).